We begin with the raw amino-acid sequence, 497 residues long: Aldehyde dehydrogenase (497 aa).

NAD(+) is bound at residue 241–246; sequence GSTLVG. Glu-264 acts as the Proton acceptor in catalysis. Cys-298 acts as the Nucleophile in catalysis.

This sequence belongs to the aldehyde dehydrogenase family.

It catalyses the reaction an aldehyde + NAD(+) + H2O = a carboxylate + NADH + 2 H(+). Its pathway is alcohol metabolism; ethanol degradation; acetate from ethanol: step 2/2. The protein is Aldehyde dehydrogenase (aldA) of Emericella nidulans (strain FGSC A4 / ATCC 38163 / CBS 112.46 / NRRL 194 / M139) (Aspergillus nidulans).